Consider the following 139-residue polypeptide: uncharacterized protein (139 aa).

Over residues 1–11 (MALSMSLSSDI) the composition is skewed to polar residues. Disordered stretches follow at residues 1 to 80 (MALS…AAAA) and 100 to 139 (ASSP…LARS). Over residues 63–80 (GAGSASAGGSRLAAAAAA) the composition is skewed to low complexity.

This is an uncharacterized protein from Homo sapiens (Human).